We begin with the raw amino-acid sequence, 359 residues long: Peptide chain release factor 1 (359 aa).

Gln232 carries the N5-methylglutamine modification.

Belongs to the prokaryotic/mitochondrial release factor family. In terms of processing, methylated by PrmC. Methylation increases the termination efficiency of RF1.

It is found in the cytoplasm. Its function is as follows. Peptide chain release factor 1 directs the termination of translation in response to the peptide chain termination codons UAG and UAA. The chain is Peptide chain release factor 1 from Lawsonia intracellularis (strain PHE/MN1-00).